We begin with the raw amino-acid sequence, 229 residues long: MIRAIVTDIEGTTSDIRFVHNVLFPYARENLPSFIIGNQQQPAVAQALDQLRAEVERPEATVQELIDVLFGFMDEDRKSTALKALQGMVWRDGYLNGSFTGHLYPDVLPALRRWQQQGLALYVYSSGSVAAQKLLFGYSDAGDITGLFSGYFDTHMGAKREVDAYRNIASQIGLPAEQLLFLSDIHEELDAARDAGWHTVQLIRGAADNASRHRQVTDFDRINQELLNS.

The protein belongs to the HAD-like hydrolase superfamily. MasA/MtnC family. Monomer. It depends on Mg(2+) as a cofactor.

It catalyses the reaction 5-methylsulfanyl-2,3-dioxopentyl phosphate + H2O = 1,2-dihydroxy-5-(methylsulfanyl)pent-1-en-3-one + phosphate. The protein operates within amino-acid biosynthesis; L-methionine biosynthesis via salvage pathway; L-methionine from S-methyl-5-thio-alpha-D-ribose 1-phosphate: step 3/6. It functions in the pathway amino-acid biosynthesis; L-methionine biosynthesis via salvage pathway; L-methionine from S-methyl-5-thio-alpha-D-ribose 1-phosphate: step 4/6. In terms of biological role, bifunctional enzyme that catalyzes the enolization of 2,3-diketo-5-methylthiopentyl-1-phosphate (DK-MTP-1-P) into the intermediate 2-hydroxy-3-keto-5-methylthiopentenyl-1-phosphate (HK-MTPenyl-1-P), which is then dephosphorylated to form the acireductone 1,2-dihydroxy-3-keto-5-methylthiopentene (DHK-MTPene). The chain is Enolase-phosphatase E1 from Erwinia tasmaniensis (strain DSM 17950 / CFBP 7177 / CIP 109463 / NCPPB 4357 / Et1/99).